We begin with the raw amino-acid sequence, 1061 residues long: NACHT, LRR and PYD domains-containing protein 12 (1061 aa).

A Pyrin domain is found at 1–95; it reads MLRTAGRDGL…WERGQREDLV (95 aa). One can recognise an FISNA domain in the interval 129–201; that stretch reads YRDYVRRKFR…SPIKIETLFE (73 aa). One can recognise an NACHT domain in the interval 211-528; the sequence is RTVVMQGAAG…EFFAAMYYIL (318 aa). An ATP-binding site is contributed by 217–224; that stretch reads GAAGIGKS. 8 LRR repeats span residues 828–848, 857–878, 885–906, 914–935, 942–962, 971–992, 999–1020, and 1028–1049; these read HLVELDLTGNALEDLGLRLLC, RLRTLWLKICRLTAAACDELAS, SLRELDLSLNELGDLGVLLLCE, KLQTLRLGICRLGSAACEGLSV, NLRELDLSFNDLGDWGLWLLA, RLQKLWLDSCGLTAKACENLYF, TLTDLYLTNNALGDTGVRLLCK, and KLRVLWLFGMDLNKMTHSRLAA.

The protein belongs to the NLRP family. Interacts (via pyrin domain) with ASC. Interacts (via pyrin domain) with FAF1 (via UBA domain). Interacts with MAP3K14; this interaction promotes proteasomal degradation of MAP3K14. Interacts with NOD2; this interaction promotes degradation of NOD2 through the ubiquitin-proteasome pathway. Interacts with HSPA1A and HSPA8. Interacts with HSP90AA1. Interacts with TRIM25; this interaction inhibits RIGI-mediated signaling pathway. In terms of tissue distribution, detected only in peripheral blood leukocytes, predominantly in eosinophils and granulocytes, and at lower levels in monocytes.

It localises to the cytoplasm. Its function is as follows. Plays an essential role as an potent mitigator of inflammation. Primarily expressed in dendritic cells and macrophages, inhibits both canonical and non-canonical NF-kappa-B and ERK activation pathways. Functions as a negative regulator of NOD2 by targeting it to degradation via the proteasome pathway. In turn, promotes bacterial tolerance. Also inhibits the RIGI-mediated immune signaling against RNA viruses by reducing the E3 ubiquitin ligase TRIM25-mediated 'Lys-63'-linked RIGI activation but enhancing the E3 ubiquitin ligase RNF125-mediated 'Lys-48'-linked RIGI degradation. Also acts as a negative regulator of inflammatory response to mitigate obesity and obesity-associated diseases in adipose tissue. This is NACHT, LRR and PYD domains-containing protein 12 (NLRP12) from Homo sapiens (Human).